Reading from the N-terminus, the 706-residue chain is DNA ligase (706 aa).

NAD(+) is bound by residues 40–44, 89–90, and Glu-120; these read DLQYD and SI. The N6-AMP-lysine intermediate role is filled by Lys-122. 4 residues coordinate NAD(+): Arg-143, Glu-190, Lys-306, and Lys-330. Cys-424, Cys-427, Cys-442, and Cys-447 together coordinate Zn(2+). A BRCT domain is found at 625 to 706; the sequence is EANLPLAGKN…FRLRYETEAT (82 aa).

This sequence belongs to the NAD-dependent DNA ligase family. LigA subfamily. Requires Mg(2+) as cofactor. Mn(2+) is required as a cofactor.

The enzyme catalyses NAD(+) + (deoxyribonucleotide)n-3'-hydroxyl + 5'-phospho-(deoxyribonucleotide)m = (deoxyribonucleotide)n+m + AMP + beta-nicotinamide D-nucleotide.. In terms of biological role, DNA ligase that catalyzes the formation of phosphodiester linkages between 5'-phosphoryl and 3'-hydroxyl groups in double-stranded DNA using NAD as a coenzyme and as the energy source for the reaction. It is essential for DNA replication and repair of damaged DNA. The sequence is that of DNA ligase from Rhodopirellula baltica (strain DSM 10527 / NCIMB 13988 / SH1).